We begin with the raw amino-acid sequence, 398 residues long: Keratinocyte differentiation factor 1 (398 aa).

Disordered regions lie at residues 1–60 and 123–156; these read MPRP…SITF and AEAN…STMG. A compositionally biased stretch (basic and acidic residues) spans 44 to 55; that stretch reads RPDPKDPGHHGP. Residue S218 is modified to Phosphoserine. Disordered stretches follow at residues 307 to 340 and 369 to 392; these read RKSR…TMVG and GAPG…SGAP. Polar residues predominate over residues 377 to 389; sequence HDSSFQGTDTDSS.

It is found in the cytoplasm. It localises to the cell junction. Functionally, plays a role in the regulation of the epidermis formation during early development. Required both as an inhibitor of basal cell proliferation and a promoter of differentiation of basal progenitor cell progeny. This Homo sapiens (Human) protein is Keratinocyte differentiation factor 1 (KDF1).